The chain runs to 243 residues: Triosephosphate isomerase (243 aa).

9–11 (NWK) serves as a coordination point for substrate. Residue His96 is the Electrophile of the active site. Glu165 functions as the Proton acceptor in the catalytic mechanism. Substrate is bound by residues Gly171, Ser204, and 225-226 (GG).

Belongs to the triosephosphate isomerase family. Homodimer.

The protein localises to the cytoplasm. The enzyme catalyses D-glyceraldehyde 3-phosphate = dihydroxyacetone phosphate. It participates in carbohydrate biosynthesis; gluconeogenesis. The protein operates within carbohydrate degradation; glycolysis; D-glyceraldehyde 3-phosphate from glycerone phosphate: step 1/1. In terms of biological role, involved in the gluconeogenesis. Catalyzes stereospecifically the conversion of dihydroxyacetone phosphate (DHAP) to D-glyceraldehyde-3-phosphate (G3P). The protein is Triosephosphate isomerase of Synechococcus sp. (strain CC9311).